Reading from the N-terminus, the 405-residue chain is Double C2-like domain-containing protein alpha (405 aa).

Residues Met-1–Ala-94 are interaction with UNC13D and DYNLT1. Positions Asp-34 to Cys-54 are disordered. Positions Gly-42–Cys-54 are enriched in gly residues. C2 domains follow at residues Ala-94–Ile-216 and Glu-256–His-389. Ca(2+) contacts are provided by Asp-125, Asp-131, Asp-186, Asp-188, Asp-287, Asp-293, Asp-347, Asp-349, and Asp-355. The segment at Arg-220–Ala-405 is interaction with UNC13D.

Interacts (via N-terminus) with UNC13A. Interacts with cytoplasmic dynein light chain DYNLT1. Interacts with UNC13D. It depends on Ca(2+) as a cofactor. Brain and mast cells.

It is found in the cytoplasmic vesicle. The protein resides in the secretory vesicle. Its subcellular location is the synaptic vesicle membrane. The protein localises to the synapse. It localises to the synaptosome. It is found in the lysosome. Its function is as follows. Calcium sensor which most probably regulates fusion of vesicles with membranes. Binds calcium and phospholipids. May be involved in calcium dependent neurotransmitter release through the interaction with UNC13A. May be involved in calcium-dependent spontaneous release of neurotransmitter in absence of action potentials in neuronal cells. Regulates Ca(2+)-dependent secretory lysosome exocytosis in mast cells. The protein is Double C2-like domain-containing protein alpha (Doc2a) of Mus musculus (Mouse).